Consider the following 530-residue polypeptide: UDP-glucuronosyltransferase 1A8 (530 aa).

The signal sequence occupies residues 1 to 25; the sequence is MARTGWTSPIPLCVSLLLTCGFAEA. N-linked (GlcNAc...) asparagine glycans are attached at residues N71, N292, and N344. Residues 488–504 traverse the membrane as a helical segment; that stretch reads VIGFLLAVVLTVAFITF.

Belongs to the UDP-glycosyltransferase family. In terms of assembly, homodimer. Homooligomer. Interacts with UGT1A1, UGT1A3, UGT1A4, UGT1A6, UGT1A7, UGT1A9 and UGT1A10 to form heterodimers. Isoform 1 interacts with isoform 2/i2 suggesting that oligomerization is involved in negative regulation of transferase activity by isoform 2. Isoform 1 also interacts with respective i2 isoforms of UGT1A1, UGT1A3, UGT1A4, UGT1A6, UGT1A7, UGT1A9 and UGT1A10. In terms of tissue distribution, expressed in kidney, colon and small intestine. Not expressed in liver. As to expression, expressed in liver, kidney, colon and small intestine.

It localises to the endoplasmic reticulum membrane. It carries out the reaction glucuronate acceptor + UDP-alpha-D-glucuronate = acceptor beta-D-glucuronoside + UDP + H(+). It catalyses the reaction 17beta-estradiol + UDP-alpha-D-glucuronate = 17beta-estradiol 3-O-(beta-D-glucuronate) + UDP + H(+). The enzyme catalyses 17alpha-estradiol + UDP-alpha-D-glucuronate = 17alpha-estradiol 3-O-(beta-D-glucuronate) + UDP + H(+). The catalysed reaction is estrone + UDP-alpha-D-glucuronate = estrone 3-O-(beta-D-glucuronate) + UDP + H(+). It carries out the reaction 16alpha,17alpha-estriol + UDP-alpha-D-glucuronate = 16alpha,17alpha-estriol 3-O-(beta-D-glucuronate) + UDP + H(+). It catalyses the reaction 2-hydroxy-17beta-estradiol + UDP-alpha-D-glucuronate = 2-hydroxy-17beta-estradiol 3-O-(beta-D-glucuronate) + UDP + H(+). The enzyme catalyses 2-hydroxy-17beta-estradiol + UDP-alpha-D-glucuronate = 17beta-estradiol 2-O-(beta-D-glucuronate) + UDP + H(+). The catalysed reaction is 2-hydroxyestrone + UDP-alpha-D-glucuronate = 2-hydroxyestrone 3-O-(beta-D-glucuronate) + UDP + H(+). It carries out the reaction 4-hydroxy-17beta-estradiol + UDP-alpha-D-glucuronate = 4-hydroxy-17beta-estradiol 3-O-(beta-D-glucuronate) + UDP + H(+). It catalyses the reaction 4-hydroxy-17beta-estradiol + UDP-alpha-D-glucuronate = 17beta-estradiol 4-O-(beta-D-glucuronate) + UDP + H(+). The enzyme catalyses 4-hydroxyestrone + UDP-alpha-D-glucuronate = 4-hydroxyestrone 3-O-(beta-D-glucuronate) + UDP + H(+). The catalysed reaction is 4-hydroxyestrone + UDP-alpha-D-glucuronate = estrone 4-O-(beta-D-glucuronate) + UDP + H(+). It carries out the reaction 2-methoxy-17beta-estradiol + UDP-alpha-D-glucuronate = 2-methoxy-17beta-estradiol 3-O-(beta-D-glucuronate) + UDP + H(+). It catalyses the reaction 2-methoxyestrone + UDP-alpha-D-glucuronate = 2-methoxyestrone 3-O-(beta-D-glucuronate) + UDP + H(+). The enzyme catalyses 4-methoxy-17beta-estradiol + UDP-alpha-D-glucuronate = 4-methoxy-17beta-estradiol 3-O-(beta-D-glucuronate) + UDP + H(+). The catalysed reaction is 4-methoxyestrone + UDP-alpha-D-glucuronate = 4-methoxyestrone 3-O-(beta-D-glucuronate) + UDP + H(+). It carries out the reaction 17beta-hydroxy-5alpha-androstan-3-one + UDP-alpha-D-glucuronate = 5alpha-dihydrotestosterone 17-O-(beta-D-glucuronate) + UDP + H(+). It catalyses the reaction 5alpha-dihydrotestosterone 17-O-(beta-D-glucuronate) + UDP-alpha-D-glucuronate = 5alpha-dihydrotestosterone 17-O-[beta-D-glucuronosyl-(1-&gt;2)-glucuronate] + UDP + H(+). The enzyme catalyses prunetin + UDP-alpha-D-glucuronate = prunetin-4'-O-beta-D-glucuronide + UDP. The catalysed reaction is prunetin + UDP-alpha-D-glucuronate = prunetin-5-O-beta-D-glucuronide + UDP. It carries out the reaction candesartan + UDP-alpha-D-glucuronate = candesartan O-beta-D-glucuronoside + UDP. It catalyses the reaction mycophenolate + UDP-alpha-D-glucuronate = mycophenolate 7-O-beta-D-glucuronide + UDP + H(+). The enzyme catalyses (E)-ferulate + UDP-alpha-D-glucuronate = (E)-4-O-(beta-D-glucuronosyl)-ferulate + UDP + H(+). The catalysed reaction is (E)-ferulate + UDP-alpha-D-glucuronate = (E)-ferulic acid beta-D-glucuronate ester + UDP. UDP-glucuronosyltransferase (UGT) that catalyzes phase II biotransformation reactions in which lipophilic substrates are conjugated with glucuronic acid to increase the metabolite's water solubility, thereby facilitating excretion into either the urine or bile. Essential for the elimination and detoxification of drugs, xenobiotics and endogenous compounds. Catalyzes the glucuronidation of endogenous steroid hormones such as androgens and estrogens. Produces dihydrotestosterone (DHT) diglucuronide from the DHT after two subsequent glucoronidation steps. Involved in the glucuronidation of the phytochemical ferulic acid at the phenolic or the carboxylic acid group. Also catalyzes the glucuronidation of the isoflavones genistein, daidzein, glycitein, formononetin, biochanin A and prunetin, which are phytoestrogens with anticancer and cardiovascular properties. Involved in the glucuronidation of the AGTR1 angiotensin receptor antagonist caderastan, a drug which can inhibit the effect of angiotensin II. Also metabolizes mycophenolate, an immunosuppressive agent. In terms of biological role, lacks UGT glucuronidation activity but acts as a negative regulator of isoform 1. The chain is UDP-glucuronosyltransferase 1A8 from Homo sapiens (Human).